Here is a 796-residue protein sequence, read N- to C-terminus: Inactive dipeptidyl peptidase 10 (796 aa).

The Cytoplasmic segment spans residues 1 to 34; that stretch reads MNQTASVSHHIKCQPSKTIKELGSNSPPQRNWKG. Residues 1–56 are mediates effects on KCND2; that stretch reads MNQTASVSHHIKCQPSKTIKELGSNSPPQRNWKGIAIALLVILVVCSLITMSVILL. Residues 35–55 traverse the membrane as a helical; Signal-anchor for type II membrane protein segment; it reads IAIALLVILVVCSLITMSVIL. At 56 to 796 the chain is on the extracellular side; that stretch reads LTPDELTNSS…VLPQEPEEDE (741 aa). N-linked (GlcNAc...) asparagine glycosylation is found at Asn90, Asn111, and Asn119. Phosphotyrosine occurs at positions 138 and 143. N-linked (GlcNAc...) asparagine glycosylation is found at Asn257, Asn342, and Asn748.

This sequence belongs to the peptidase S9B family. DPPIV subfamily. As to quaternary structure, may form oligomers. Interacts with KCND1. Interacts with KCND2. N-glycosylation is important for cell surface expression, specially at Asn-257, which is crucial. As to expression, found in serum, T-cells and brain (at protein level). Expressed in brain, pancreas, spinal cord and adrenal glands.

It is found in the cell membrane. Its function is as follows. Promotes cell surface expression of the potassium channel KCND2. Modulates the activity and gating characteristics of the potassium channel KCND2. Has no dipeptidyl aminopeptidase activity. The chain is Inactive dipeptidyl peptidase 10 (DPP10) from Homo sapiens (Human).